A 150-amino-acid polypeptide reads, in one-letter code: Large ribosomal subunit protein bL9 (150 aa).

Belongs to the bacterial ribosomal protein bL9 family.

In terms of biological role, binds to the 23S rRNA. The protein is Large ribosomal subunit protein bL9 of Streptococcus equi subsp. zooepidemicus (strain MGCS10565).